The following is a 545-amino-acid chain: Lysine--tRNA ligase (545 aa).

Positions 41-49 (PSGVPHLGH) match the 'HIGH' region motif. The 'KMSKS' region motif lies at 306–310 (ALSSS).

Belongs to the class-I aminoacyl-tRNA synthetase family.

Its subcellular location is the cytoplasm. The catalysed reaction is tRNA(Lys) + L-lysine + ATP = L-lysyl-tRNA(Lys) + AMP + diphosphate. The sequence is that of Lysine--tRNA ligase from Natronomonas pharaonis (strain ATCC 35678 / DSM 2160 / CIP 103997 / JCM 8858 / NBRC 14720 / NCIMB 2260 / Gabara) (Halobacterium pharaonis).